Reading from the N-terminus, the 240-residue chain is Large ribosomal subunit protein uL2 (240 aa).

Residues 1–10 are compositionally biased toward polar residues; it reads MGHRISTQSR. Disordered regions lie at residues 1–20 and 204–240; these read MGHR…YRAP and FGGG…GYRR.

The protein belongs to the universal ribosomal protein uL2 family. In terms of assembly, part of the 50S ribosomal subunit. Forms a bridge to the 30S subunit in the 70S ribosome.

In terms of biological role, one of the primary rRNA binding proteins. Required for association of the 30S and 50S subunits to form the 70S ribosome, for tRNA binding and peptide bond formation. It has been suggested to have peptidyltransferase activity; this is somewhat controversial. Makes several contacts with the 16S rRNA in the 70S ribosome. The polypeptide is Large ribosomal subunit protein uL2 (Methanocorpusculum labreanum (strain ATCC 43576 / DSM 4855 / Z)).